Reading from the N-terminus, the 424-residue chain is Tyrosine--tRNA ligase (424 aa).

L-tyrosine is bound at residue tyrosine 37. The short motif at 42–51 is the 'HIGH' region element; the sequence is ITADSLHVGH. L-tyrosine-binding residues include tyrosine 175 and glutamine 179. The 'KMSKS' region signature appears at 235–239; sequence KFGKT. An ATP-binding site is contributed by lysine 238. One can recognise an S4 RNA-binding domain in the interval 356–414; it reads GNLQQLLVYSRLALSRSHAKSMIVSNSVRINNIIQNNPFYILCNRDKMYHKYTLLSRGK.

Belongs to the class-I aminoacyl-tRNA synthetase family. TyrS type 1 subfamily. As to quaternary structure, homodimer.

It localises to the cytoplasm. The catalysed reaction is tRNA(Tyr) + L-tyrosine + ATP = L-tyrosyl-tRNA(Tyr) + AMP + diphosphate + H(+). Catalyzes the attachment of tyrosine to tRNA(Tyr) in a two-step reaction: tyrosine is first activated by ATP to form Tyr-AMP and then transferred to the acceptor end of tRNA(Tyr). This Buchnera aphidicola subsp. Baizongia pistaciae (strain Bp) protein is Tyrosine--tRNA ligase.